A 357-amino-acid polypeptide reads, in one-letter code: Major outer membrane protein P.IB (357 aa).

The first 19 residues, 1–19, serve as a signal peptide directing secretion; that stretch reads MKKSLIALTLAALPVAAMA.

This sequence belongs to the Gram-negative porin family. As to quaternary structure, homotrimer.

It localises to the cell outer membrane. Functionally, serves as a slightly cation selective porin. In Neisseria sicca, this protein is Major outer membrane protein P.IB (por).